A 287-amino-acid polypeptide reads, in one-letter code: Bifunctional protein FolD (287 aa).

NADP(+)-binding positions include 166-168 (GAS), Ser-191, and Ile-232.

Belongs to the tetrahydrofolate dehydrogenase/cyclohydrolase family. Homodimer.

The enzyme catalyses (6R)-5,10-methylene-5,6,7,8-tetrahydrofolate + NADP(+) = (6R)-5,10-methenyltetrahydrofolate + NADPH. It carries out the reaction (6R)-5,10-methenyltetrahydrofolate + H2O = (6R)-10-formyltetrahydrofolate + H(+). Its pathway is one-carbon metabolism; tetrahydrofolate interconversion. Catalyzes the oxidation of 5,10-methylenetetrahydrofolate to 5,10-methenyltetrahydrofolate and then the hydrolysis of 5,10-methenyltetrahydrofolate to 10-formyltetrahydrofolate. The protein is Bifunctional protein FolD of Haemophilus ducreyi (strain 35000HP / ATCC 700724).